The following is a 147-amino-acid chain: Ubiquitin-conjugating enzyme E2 4 (147 aa).

A UBC core domain is found at 1-147; the sequence is MALKRINREL…AREWTRKYAI (147 aa). Cys85 functions as the Glycyl thioester intermediate in the catalytic mechanism.

Belongs to the ubiquitin-conjugating enzyme family. Interacts with the E1 ubiquitin-activating enzyme ptr3 and E3 ubiquitin-protein ligase pub2.

It carries out the reaction S-ubiquitinyl-[E1 ubiquitin-activating enzyme]-L-cysteine + [E2 ubiquitin-conjugating enzyme]-L-cysteine = [E1 ubiquitin-activating enzyme]-L-cysteine + S-ubiquitinyl-[E2 ubiquitin-conjugating enzyme]-L-cysteine.. Its pathway is protein modification; protein ubiquitination. Its function is as follows. E2 ubiquitin-conjugating enzyme that catalyzes the covalent attachment of ubiquitin to other proteins. Mediates the selective degradation of short-lived and abnormal proteins. Mediates ubiquitination of pex5. This chain is Ubiquitin-conjugating enzyme E2 4 (ubc4), found in Schizosaccharomyces pombe (strain 972 / ATCC 24843) (Fission yeast).